An 887-amino-acid polypeptide reads, in one-letter code: Kinesin-like protein KIF20A (887 aa).

Ser2 is modified (N-acetylserine). Phosphoserine occurs at positions 7, 14, and 21. The region spanning Lys63–Leu506 is the Kinesin motor domain. Gly159–Thr166 is a binding site for ATP. Ser527 bears the Phosphoserine; by PLK1 mark. The tract at residues Ser527 to Asp553 is disordered. Over residues Asp543–Asp553 the composition is skewed to acidic residues. Residues Lys559–Lys804 adopt a coiled-coil conformation. Phosphoserine is present on residues Ser683 and Ser823. The interval Ala805–Tyr887 is globular. The disordered stretch occupies residues Lys826 to His875. Residue Thr855 is modified to Phosphothreonine. Polar residues predominate over residues Pro856 to Ser865. A phosphoserine mark is found at Ser865, Ser876, and Ser881.

The protein belongs to the TRAFAC class myosin-kinesin ATPase superfamily. Kinesin family. Post-translationally, phosphorylated by PLK1 at Ser-527 during mitosis, creating a docking site for PLK1 and recruiting PLK1 at central spindle. In terms of tissue distribution, ubiquitously expressed, with highest levels in spleen and testis.

The protein resides in the golgi apparatus. It is found in the cytoplasm. Its subcellular location is the cytoskeleton. It localises to the spindle. In terms of biological role, mitotic kinesin required for chromosome passenger complex (CPC)-mediated cytokinesis. Following phosphorylation by PLK1, involved in recruitment of PLK1 to the central spindle. Interacts with guanosine triphosphate (GTP)-bound forms of RAB6A and RAB6B. May act as a motor required for the retrograde RAB6 regulated transport of Golgi membranes and associated vesicles along microtubules. Has a microtubule plus end-directed motility. The protein is Kinesin-like protein KIF20A (Kif20a) of Mus musculus (Mouse).